Here is a 136-residue protein sequence, read N- to C-terminus: Transmembrane protein 203 (136 aa).

The interval 1 to 51 (MLFSLRELVQWLGFATFEIFVHLLALLVFSVLLALRVDGLVPGLSWWNVFV) is interaction with STING1. The next 4 membrane-spanning stretches (helical) occupy residues 14–34 (FATF…VLLA), 50–72 (FVPF…VRLF), 81–101 (VLRL…EMLL), and 112–132 (LWFG…MIRA). The segment at 52 to 136 (PFFAADGLST…LLMIRACRVN (85 aa)) is required for the lysosomal localization of the STING-TMEM203 complex.

In terms of assembly, homodimer. Interacts with ATP2A2, ITPR3 and STIM1. Interacts with STING1 (via transmembrane domain). In terms of tissue distribution, increased expression seen in T-lymphocytes from patients with systemic lupus erythematosus (SLE).

It localises to the endoplasmic reticulum membrane. The protein localises to the endoplasmic reticulum-Golgi intermediate compartment. Its subcellular location is the lysosome membrane. Involved in the regulation of cellular calcium homeotasis. Required for spermatogenesis. Acts as a regulator of STING-mediated inflammatory signaling in macrophages. Forms a complex with STING, promoting the activity of TBK1 kinase and the transcription factor IRF3, leading to activation of type I interferon expression. This Homo sapiens (Human) protein is Transmembrane protein 203 (TMEM203).